The sequence spans 344 residues: Phosphate acyltransferase (344 aa).

The protein belongs to the PlsX family. In terms of assembly, homodimer. Probably interacts with PlsY.

It localises to the cytoplasm. It carries out the reaction a fatty acyl-[ACP] + phosphate = an acyl phosphate + holo-[ACP]. Its pathway is lipid metabolism; phospholipid metabolism. Its function is as follows. Catalyzes the reversible formation of acyl-phosphate (acyl-PO(4)) from acyl-[acyl-carrier-protein] (acyl-ACP). This enzyme utilizes acyl-ACP as fatty acyl donor, but not acyl-CoA. This is Phosphate acyltransferase from Cronobacter sakazakii (strain ATCC BAA-894) (Enterobacter sakazakii).